The chain runs to 179 residues: Macro domain-containing protein XAC3343 (179 aa).

A Macro domain is found at 1-175 (MRIEVWQGDI…AYQQALATQE (175 aa)).

Belongs to the MacroD-type family.

This Xanthomonas axonopodis pv. citri (strain 306) protein is Macro domain-containing protein XAC3343.